A 401-amino-acid polypeptide reads, in one-letter code: O-methyltransferase mfmE (401 aa).

Residues 243 to 244 (GG) and Asp268 contribute to the S-adenosyl-L-methionine site. His308 (proton acceptor) is an active-site residue.

The protein belongs to the class I-like SAM-binding methyltransferase superfamily. Cation-independent O-methyltransferase family. COMT subfamily.

It participates in secondary metabolite biosynthesis; terpenoid biosynthesis. Functionally, O-methyltransferase; part of the gene cluster that mediates the biosynthesis of the phthalide-terpenoid hybrid 11'-O-desmethylfendlerol. Within the pathway, mfmE catalyzes the 7-O-methylation of the phthalide 5,7-dihydroxy-4-(hydroxymethyl)-6-methylphthalide to yield 5-hydroxy-4-(hydroxymethyl)-7-methoxy-6-methylphthalide. The biosynthesis of 11'-O-desmethylfendlerol begins with the NR-PKS mfmB that forms 3,5-dimethylorsellinic acid (DMOA), which is then transformed into the phthalide 5,7-dihydroxy-4-(hydroxymethyl)-6-methylphthalide by the cytochrome P450 monooxygenase mfmA and the hydrolase mfmC. Subsequently, the methyltransferase mfmE catalyzes 7-O-methylation to yield 5-hydroxy-4-(hydroxymethyl)-7-methoxy-6-methylphthalide, which undergoes C-3 hydroxylation by the cytochrome P450 monooxygenase mfmF. The resultant cyclopolic acid (2,5-dihydroxy-4-(hydroxymethyl)-7-methoxy-6-methylphthalide) is then farnesylated by the DMATS-type prenyltransferase mfmD to afford 5-O-farnesylcyclopolic acid. Finally, the Pyr4-family terpene cyclase mfmH cyclizes the farnesyl moiety of 5-O-farnesylcyclopolic acid into a drimane-like structure, thus completing the biosynthesis of 11'-O-desmethylfendlerol. The chain is O-methyltransferase mfmE from Annulohypoxylon moriforme (Filamentous fungus).